A 547-amino-acid chain; its full sequence is Puff-specific protein Bx42 (547 aa).

The interval 177–343 (AQYIRYTPSQ…AREERAGLRN (167 aa)) is SNW. Ser-227 and Ser-235 each carry phosphoserine. Disordered stretches follow at residues 333–398 (RARE…ERDI) and 486–547 (QFSG…SKRD). Basic and acidic residues-rich tracts occupy residues 358 to 398 (EVRE…ERDI) and 526 to 539 (KRAE…SSHS).

This sequence belongs to the SNW family.

The protein localises to the nucleus. In terms of biological role, may play a role in chromatin structure and function. This Drosophila melanogaster (Fruit fly) protein is Puff-specific protein Bx42 (Bx42).